We begin with the raw amino-acid sequence, 318 residues long: Acetyl-coenzyme A carboxylase carboxyl transferase subunit alpha (318 aa).

Residues Lys39–Glu293 form the CoA carboxyltransferase C-terminal domain.

The protein belongs to the AccA family. As to quaternary structure, acetyl-CoA carboxylase is a heterohexamer composed of biotin carboxyl carrier protein (AccB), biotin carboxylase (AccC) and two subunits each of ACCase subunit alpha (AccA) and ACCase subunit beta (AccD).

The protein localises to the cytoplasm. It carries out the reaction N(6)-carboxybiotinyl-L-lysyl-[protein] + acetyl-CoA = N(6)-biotinyl-L-lysyl-[protein] + malonyl-CoA. The protein operates within lipid metabolism; malonyl-CoA biosynthesis; malonyl-CoA from acetyl-CoA: step 1/1. Its function is as follows. Component of the acetyl coenzyme A carboxylase (ACC) complex. First, biotin carboxylase catalyzes the carboxylation of biotin on its carrier protein (BCCP) and then the CO(2) group is transferred by the carboxyltransferase to acetyl-CoA to form malonyl-CoA. The protein is Acetyl-coenzyme A carboxylase carboxyl transferase subunit alpha of Geobacter metallireducens (strain ATCC 53774 / DSM 7210 / GS-15).